Reading from the N-terminus, the 66-residue chain is Large ribosomal subunit protein uL29 (66 aa).

The protein belongs to the universal ribosomal protein uL29 family.

This chain is Large ribosomal subunit protein uL29, found in Rhizobium etli (strain ATCC 51251 / DSM 11541 / JCM 21823 / NBRC 15573 / CFN 42).